The following is a 554-amino-acid chain: Cytochrome P450 monooxygenase himC (554 aa).

The chain crosses the membrane as a helical span at residues tyrosine 52–tyrosine 72. Asparagine 110, asparagine 328, asparagine 414, and asparagine 425 each carry an N-linked (GlcNAc...) asparagine glycan. A heme-binding site is contributed by cysteine 501.

It belongs to the cytochrome P450 family. Heme is required as a cofactor.

The protein localises to the membrane. Its pathway is secondary metabolite biosynthesis. Functionally, cytochrome P450 monooxygenase; part of the him gene cluster that mediates the biosynthesis of himeic acid A, a ubiquitin-activating enzyme (E1) inhibitor. First, himA, together with the trans-enoyl reductase himH, catalyzes the formation of apolyketide chain, which is then condensed with leucine by the NRPS activity of himA. Dieckmann cyclization and release from himA gives a tetramic acid intermediate as the product of himA PKS-NRPS. HimG then catalyzes alpha-oxidation of the tetramic acid ring, with a subsequent rearrangement to yield apyrone intermediate. Two terminal methyl groups of polyketide and amide side chains are oxidized to carboxylic acids by himC cytochrome P450 monooxygenase to form himeic acid A. Himeic acid A is further converted to himeic acid B and C during culture growth. No gene responsible for pyrone to pyridone conversion was found in the him gene cluster and himeic acid A is non-enzymatically converted to himeic acid C by the incorporation of an ammonium nitrogen atom in a pH5 buffer, and to himeic acid B at a conversion ratio of 50% during incubation in MeOH for 5 days. This is Cytochrome P450 monooxygenase himC from Aspergillus japonicus.